We begin with the raw amino-acid sequence, 359 residues long: GDSL esterase/lipase At2g30310 (359 aa).

Positions 1–28 are cleaved as a signal peptide; the sequence is MSTSKTIVFGLFVATLLVSCNVAANATT. Residue serine 41 is the Nucleophile of the active site. Residues asparagine 103 and asparagine 325 are each glycosylated (N-linked (GlcNAc...) asparagine). Catalysis depends on residues aspartate 333 and histidine 336.

It belongs to the 'GDSL' lipolytic enzyme family.

It is found in the secreted. This chain is GDSL esterase/lipase At2g30310, found in Arabidopsis thaliana (Mouse-ear cress).